Here is a 779-residue protein sequence, read N- to C-terminus: LPS-assembly protein LptD (779 aa).

A signal peptide spans 1–23 (MKIRYSVLSTFIISALYSQDTQA).

Belongs to the LptD family. In terms of assembly, component of the lipopolysaccharide transport and assembly complex. Interacts with LptE and LptA.

It is found in the cell outer membrane. Together with LptE, is involved in the assembly of lipopolysaccharide (LPS) at the surface of the outer membrane. In Haemophilus ducreyi (strain 35000HP / ATCC 700724), this protein is LPS-assembly protein LptD.